A 427-amino-acid polypeptide reads, in one-letter code: Adenylosuccinate synthetase (427 aa).

GTP contacts are provided by residues 12 to 18 (GDEGKGK) and 40 to 42 (GHT). Asp-13 (proton acceptor) is an active-site residue. 2 residues coordinate Mg(2+): Asp-13 and Gly-40. Residues 13–16 (DEGK), 38–41 (NAGH), Thr-128, Arg-142, Gln-223, Thr-238, and Arg-302 contribute to the IMP site. Catalysis depends on His-41, which acts as the Proton donor. Residue 298 to 304 (TTTGRPR) coordinates substrate. GTP contacts are provided by residues Arg-304, 330–332 (SID), and 412–414 (SVG).

Belongs to the adenylosuccinate synthetase family. In terms of assembly, homodimer. Mg(2+) serves as cofactor.

The protein resides in the cytoplasm. The catalysed reaction is IMP + L-aspartate + GTP = N(6)-(1,2-dicarboxyethyl)-AMP + GDP + phosphate + 2 H(+). It functions in the pathway purine metabolism; AMP biosynthesis via de novo pathway; AMP from IMP: step 1/2. Its function is as follows. Plays an important role in the de novo pathway of purine nucleotide biosynthesis. Catalyzes the first committed step in the biosynthesis of AMP from IMP. The sequence is that of Adenylosuccinate synthetase from Staphylococcus saprophyticus subsp. saprophyticus (strain ATCC 15305 / DSM 20229 / NCIMB 8711 / NCTC 7292 / S-41).